Consider the following 396-residue polypeptide: Probable arginine kinase F46H5.3 (396 aa).

Residues 47 to 129 form the Phosphagen kinase N-terminal domain; that stretch reads KIEEGYAKLQ…FDPLIQDYHN (83 aa). A substrate-binding site is contributed by 102–106; it reads GVGVY. The Phosphagen kinase C-terminal domain maps to 159–396; it reads FINSTRIRCG…AHLIALEKAA (238 aa). Residues 162–166 and His-226 contribute to the ATP site; that span reads STRIR. Glu-266 serves as a coordination point for substrate. Residue Arg-270 coordinates ATP. Cys-312 contributes to the substrate binding site. Residues 321 to 325, 349 to 354, and Asp-364 contribute to the ATP site; these read RASVH and RGIHGE. Residue Glu-354 participates in substrate binding.

The protein belongs to the ATP:guanido phosphotransferase family.

It catalyses the reaction L-arginine + ATP = N(omega)-phospho-L-arginine + ADP + H(+). This is Probable arginine kinase F46H5.3 from Caenorhabditis elegans.